An 87-amino-acid polypeptide reads, in one-letter code: Small ribosomal subunit protein uS15 (87 aa).

The protein belongs to the universal ribosomal protein uS15 family. As to quaternary structure, part of the 30S ribosomal subunit. Forms a bridge to the 50S subunit in the 70S ribosome, contacting the 23S rRNA.

In terms of biological role, one of the primary rRNA binding proteins, it binds directly to 16S rRNA where it helps nucleate assembly of the platform of the 30S subunit by binding and bridging several RNA helices of the 16S rRNA. Functionally, forms an intersubunit bridge (bridge B4) with the 23S rRNA of the 50S subunit in the ribosome. The polypeptide is Small ribosomal subunit protein uS15 (Cutibacterium acnes (strain DSM 16379 / KPA171202) (Propionibacterium acnes)).